A 599-amino-acid polypeptide reads, in one-letter code: Aspartate--tRNA(Asp/Asn) ligase (599 aa).

Residue Glu174 coordinates L-aspartate. An aspartate region spans residues 198-201; it reads QLFK. Residue Arg220 participates in L-aspartate binding. ATP-binding positions include 220 to 222 and Gln229; that span reads RDE. His457 contacts L-aspartate. Glu491 contacts ATP. An L-aspartate-binding site is contributed by Arg498. 543-546 contacts ATP; that stretch reads GLDR.

This sequence belongs to the class-II aminoacyl-tRNA synthetase family. Type 1 subfamily. As to quaternary structure, homodimer.

Its subcellular location is the cytoplasm. The catalysed reaction is tRNA(Asx) + L-aspartate + ATP = L-aspartyl-tRNA(Asx) + AMP + diphosphate. Its function is as follows. Aspartyl-tRNA synthetase with relaxed tRNA specificity since it is able to aspartylate not only its cognate tRNA(Asp) but also tRNA(Asn). Reaction proceeds in two steps: L-aspartate is first activated by ATP to form Asp-AMP and then transferred to the acceptor end of tRNA(Asp/Asn). This Paraburkholderia phytofirmans (strain DSM 17436 / LMG 22146 / PsJN) (Burkholderia phytofirmans) protein is Aspartate--tRNA(Asp/Asn) ligase.